A 2325-amino-acid polypeptide reads, in one-letter code: Centriolin (2325 aa).

Positions 1–33 (MKKGSQQKIFSKAKIPSSSHSPIPSSMSNMRSR) are disordered. Low complexity predominate over residues 16–33 (PSSSHSPIPSSMSNMRSR). LRR repeat units follow at residues 126–147 (KLEV…DKLL), 148–169 (KLRE…ENMC), 170–191 (NLQK…LGKK), and 194–215 (SLRV…SKLK). In terms of domain architecture, LRRCT spans 228–266 (NPVVTLPHYLQFTIFHLRSLESLEGQPVTTQDRQEAFER). Coiled-coil stretches lie at residues 267-343 (FSLE…IELT) and 435-799 (LDTQ…LNHV). A Phosphoserine modification is found at S831. The stretch at 851-1101 (LARSKWERDE…ARLQNVLDLT (251 aa)) forms a coiled coil. Residues 1150–1241 (PSSKVSSHSS…DQEEPPFVPP (92 aa)) are disordered. A compositionally biased stretch (acidic residues) spans 1224 to 1235 (SQEESELDDQEE). Residues 1317–2255 (EHHNLENEVS…DRLKAQLRHC (939 aa)) adopt a coiled-coil conformation. S1475 is modified (phosphoserine). The tract at residues 1948–2118 (MMFQRLQKER…ELVAQDNHER (171 aa)) is required for centrosome localization. The tract at residues 1985–2325 (QKSKLDQVLS…QNQEKNASAR (341 aa)) is sufficient for interaction with HOOK2. The interval 2288 to 2325 (VTSTSADSASSPSLSQLESSLTEDSQLGQNQEKNASAR) is disordered. The span at 2290 to 2314 (STSADSASSPSLSQLESSLTEDSQL) shows a compositional bias: low complexity. Over residues 2315–2325 (GQNQEKNASAR) the composition is skewed to polar residues.

Interacts with HOOK2. Interacts with EXOC6 and SNAPIN. Associates with the exocyst complex. In terms of tissue distribution, widely expressed with highest levels in testis and trachea.

The protein resides in the cytoplasm. It localises to the cytoskeleton. It is found in the microtubule organizing center. The protein localises to the centrosome. Its subcellular location is the midbody. The protein resides in the midbody ring. Its function is as follows. Involved in cell cycle progression and cytokinesis. During the late steps of cytokinesis, anchors exocyst and SNARE complexes at the midbody, thereby allowing secretory vesicle-mediated abscission. In Homo sapiens (Human), this protein is Centriolin (CNTRL).